A 249-amino-acid chain; its full sequence is Hydantoin racemase (249 aa).

The protein belongs to the HyuE racemase family. Homohexamer.

It carries out the reaction a D-5-monosubstituted hydantoin = a L-5-monosubstituted hydantoin. It catalyses the reaction D-5-[2-(methylsulfanyl)ethyl]hydantoin = L-5-[2-(methysulfanyl)ethyl]hydantoin. The catalysed reaction is D-5-benzylhydantoin = L-5-benzylhydantoin. The enzyme catalyses D-5-isopropylhydantoin = L-5-isopropylhydantoin. It carries out the reaction D-5-isobutylhydantoin = L-5-isobutylhydantoin. With respect to regulation, strongly inhibited by Cu(2+) and Zn(2+). Slightly stimulated by the addition of Mn(2+) or Co(2+), but also by metal-chelating agents such as EDTA or EGTA, indicating that the enzyme is not a metalloenzyme. In terms of biological role, involved in the asymmetric conversion of racemic 5-substituted hydantoins to the corresponding L-amino acids. Catalyzes the racemization via enolization of D- and L-5-monosubstituted hydantoins. Is able to racemize 5-substituted hydantoins having aromatic or aliphatic substituents such as 5-(2-methylthioethyl)hydantoin, 5-isopropylhydantoin, 5-isobutylhydantoin and 5-benzylhydantoin. The polypeptide is Hydantoin racemase (Pseudomonas sp. (strain NS671)).